The chain runs to 781 residues: Mitochondrial inner membrane m-AAA protease component paraplegin (781 aa).

The N-terminal 43 residues, 1–43, are a transit peptide targeting the mitochondrion; the sequence is MAAALLLLRGLRPGPEPRPRRLWGLLSGRGPGLSSGAGARRPY. Disordered stretches follow at residues 22–56 and 103–135; these read LWGLLSGRGPGLSSGAGARRPYAARGTPVGPAAAG and TSRMKQKNKDNDKPKGKTPEDDEEEKRRKERED. Residues 36-56 are compositionally biased toward low complexity; that stretch reads GAGARRPYAARGTPVGPAAAG. The propeptide at 44 to 105 is removed in mature form; the sequence is AARGTPVGPA…GSTLYFNTSR (62 aa). Residues 106 to 144 are Mitochondrial matrix-facing; that stretch reads MKQKNKDNDKPKGKTPEDDEEEKRRKEREDQMYRERLRT. A compositionally biased stretch (basic and acidic residues) spans 109–135; sequence KNKDNDKPKGKTPEDDEEEKRRKERED. A helical membrane pass occupies residues 145 to 165; sequence LFIIALVMSLLNSLSTSGGSI. Residues 166 to 248 are Mitochondrial intermembrane-facing; that stretch reads SWADFVNEML…DRIPVSYKRT (83 aa). Residues 249–269 form a helical membrane-spanning segment; sequence GFFGNALYALGMTAVGLAILW. Residues 270-781 are Mitochondrial matrix-facing; the sequence is YVFRLAGMTG…ASGEEEAPAP (512 aa). Alanine 312, glycine 352, cysteine 353, glycine 354, lysine 355, threonine 356, and leucine 357 together coordinate ATP. Position 505 is a 3'-nitrotyrosine (tyrosine 505). Histidine 574 provides a ligand contact to Zn(2+). The active site involves glutamate 575. Residues histidine 578 and aspartate 650 each contribute to the Zn(2+) site. Positions 701–781 are interaction with PPIF; sequence HEAKLLVAKA…ASGEEEAPAP (81 aa).

In the N-terminal section; belongs to the AAA ATPase family. It in the C-terminal section; belongs to the peptidase M41 family. Forms heterohexamers with SPG7 and AFG3L1. The m-AAA protease is either composed of homohexamers of AFG3L2 or heterohexamers of AFG3L1, AFG3L2 and/or SPG7. Component of the mitochondrial permeability transition pore complex (mPTPC), at least composed of SPG7, VDAC1 and PPIF. Interacts with MAIP1. The cofactor is Zn(2+). In terms of processing, upon import into the mitochondrion, the N-terminal transit peptide is cleaved by the mitochondrial-processing peptidase (MPP) to generate an intermediate form which undergoes a second proteolytic cleavage mediated by proteases AFG3L1 and/or AFG3L2 removing an additional N-terminal fragment to generate the proteolytically active mature form. In terms of tissue distribution, expressed in the brain and retina (at protein level).

The protein resides in the mitochondrion inner membrane. The enzyme catalyses ATP + H2O = ADP + phosphate + H(+). Functionally, catalytic component of the m-AAA protease, a protease that plays a key role in proteostasis of inner mitochondrial membrane proteins, and which is essential for axonal and neuron development. SPG7 possesses both ATPase and protease activities: the ATPase activity is required to unfold substrates, threading them into the internal proteolytic cavity for hydrolysis into small peptide fragments. The m-AAA protease exerts a dual role in the mitochondrial inner membrane: it mediates the processing of specific regulatory proteins and ensures protein quality control by degrading misfolded polypeptides. Mediates protein maturation of the mitochondrial ribosomal subunit MRPL32/bL32m by catalyzing the cleavage of the presequence of MRPL32/bL32m prior to assembly into the mitochondrial ribosome. Acts as a regulator of calcium in neurons by mediating degradation of SMDT1/EMRE before its assembly with the uniporter complex, limiting the availability of SMDT1/EMRE for MCU assembly and promoting efficient assembly of gatekeeper subunits with MCU. Also regulates mitochondrial calcium by catalyzing degradation of MCU. Plays a role in the formation and regulation of the mitochondrial permeability transition pore (mPTP) and its proteolytic activity is dispensable for this function. This chain is Mitochondrial inner membrane m-AAA protease component paraplegin, found in Mus musculus (Mouse).